The following is a 214-amino-acid chain: Protein DEHYDRATION-INDUCED 19 homolog 5 (214 aa).

S110 carries the post-translational modification Phosphoserine. Residues 148-185 (PKKSKLVQPDSSSEASMEDNSLIRDSTEKDWESPSPLS) are disordered. The segment covering 156–166 (PDSSSEASMED) has biased composition (polar residues). A compositionally biased stretch (basic and acidic residues) spans 168-179 (SLIRDSTEKDWE).

It belongs to the Di19 family. In terms of processing, phosphorylated in vitro by CPK3 or CPK11. As to expression, expressed in seedlings, roots, leaves, stems, flowers and siliques.

It is found in the nucleus. The chain is Protein DEHYDRATION-INDUCED 19 homolog 5 (DI19-5) from Arabidopsis thaliana (Mouse-ear cress).